The sequence spans 284 residues: 2-dehydro-3-deoxyphosphooctonate aldolase (284 aa).

This sequence belongs to the KdsA family.

Its subcellular location is the cytoplasm. The catalysed reaction is D-arabinose 5-phosphate + phosphoenolpyruvate + H2O = 3-deoxy-alpha-D-manno-2-octulosonate-8-phosphate + phosphate. It functions in the pathway carbohydrate biosynthesis; 3-deoxy-D-manno-octulosonate biosynthesis; 3-deoxy-D-manno-octulosonate from D-ribulose 5-phosphate: step 2/3. The protein operates within bacterial outer membrane biogenesis; lipopolysaccharide biosynthesis. This is 2-dehydro-3-deoxyphosphooctonate aldolase from Pectobacterium carotovorum subsp. carotovorum (strain PC1).